The primary structure comprises 516 residues: Replication factor C large subunit (516 aa).

44–51 (GAPGVGKT) is a binding site for ATP. The disordered stretch occupies residues 421–516 (RSEAVEAHAG…DGQAGLSEFM (96 aa)). Over residues 454 to 467 (VQSHKSAESGDDTV) the composition is skewed to basic and acidic residues. Low complexity predominate over residues 479 to 496 (QSGASETASATESASDSD). Positions 497 to 508 (ASTDTDADDDDG) are enriched in acidic residues.

The protein belongs to the activator 1 small subunits family. RfcL subfamily. In terms of assembly, heteromultimer composed of small subunits (RfcS) and large subunits (RfcL).

In terms of biological role, part of the RFC clamp loader complex which loads the PCNA sliding clamp onto DNA. The sequence is that of Replication factor C large subunit from Haloquadratum walsbyi (strain DSM 16790 / HBSQ001).